We begin with the raw amino-acid sequence, 303 residues long: Nucleotide-binding protein Dvul_1502 (303 aa).

Position 23 to 30 (23 to 30 (GLSGAGKS)) interacts with ATP. GTP is bound at residue 75–78 (DLRE).

It belongs to the RapZ-like family.

Its function is as follows. Displays ATPase and GTPase activities. The chain is Nucleotide-binding protein Dvul_1502 from Nitratidesulfovibrio vulgaris (strain DP4) (Desulfovibrio vulgaris).